A 220-amino-acid polypeptide reads, in one-letter code: GTP cyclohydrolase 1 (220 aa).

Zn(2+)-binding residues include Cys-109, His-112, and Cys-180.

The protein belongs to the GTP cyclohydrolase I family. In terms of assembly, homomer.

The enzyme catalyses GTP + H2O = 7,8-dihydroneopterin 3'-triphosphate + formate + H(+). Its pathway is cofactor biosynthesis; 7,8-dihydroneopterin triphosphate biosynthesis; 7,8-dihydroneopterin triphosphate from GTP: step 1/1. In Pectobacterium carotovorum subsp. carotovorum (strain PC1), this protein is GTP cyclohydrolase 1.